A 901-amino-acid polypeptide reads, in one-letter code: Protein translocase subunit SecA (901 aa).

ATP contacts are provided by residues Gln87, 105-109 (GEGKT), and Asp512. Residues 859–901 (HQDDDSAAAAALAAQTGERKVGRNDPCPCGSGKKYKQCHGRLQ) are disordered. The Zn(2+) site is built by Cys885, Cys887, Cys896, and His897. Basic residues predominate over residues 891–901 (KKYKQCHGRLQ).

This sequence belongs to the SecA family. Monomer and homodimer. Part of the essential Sec protein translocation apparatus which comprises SecA, SecYEG and auxiliary proteins SecDF-YajC and YidC. It depends on Zn(2+) as a cofactor.

It localises to the cell inner membrane. It is found in the cytoplasm. It catalyses the reaction ATP + H2O + cellular proteinSide 1 = ADP + phosphate + cellular proteinSide 2.. Its function is as follows. Part of the Sec protein translocase complex. Interacts with the SecYEG preprotein conducting channel. Has a central role in coupling the hydrolysis of ATP to the transfer of proteins into and across the cell membrane, serving both as a receptor for the preprotein-SecB complex and as an ATP-driven molecular motor driving the stepwise translocation of polypeptide chains across the membrane. The sequence is that of Protein translocase subunit SecA from Escherichia coli O157:H7.